The following is a 133-amino-acid chain: Nodulation protein K (133 aa).

In Bradyrhizobium elkanii, this protein is Nodulation protein K (nodK).